Reading from the N-terminus, the 102-residue chain is Large ribosomal subunit protein uL24 (102 aa).

Belongs to the universal ribosomal protein uL24 family. As to quaternary structure, part of the 50S ribosomal subunit.

One of two assembly initiator proteins, it binds directly to the 5'-end of the 23S rRNA, where it nucleates assembly of the 50S subunit. In terms of biological role, one of the proteins that surrounds the polypeptide exit tunnel on the outside of the subunit. In Agrobacterium fabrum (strain C58 / ATCC 33970) (Agrobacterium tumefaciens (strain C58)), this protein is Large ribosomal subunit protein uL24.